We begin with the raw amino-acid sequence, 596 residues long: Protein FlbA (596 aa).

TPR repeat units follow at residues 91-124, 159-192, 193-226, and 228-260; these read GLAW…LPDH, VEGA…NPEA, AVLW…APDF, and KAYH…PGSP.

This is Protein FlbA (flbA) from Caulobacter vibrioides (strain ATCC 19089 / CIP 103742 / CB 15) (Caulobacter crescentus).